Consider the following 214-residue polypeptide: Rac-like GTP-binding protein 3 (214 aa).

Position 15–22 (G15–T22) interacts with GTP. The short motif at Y37–F45 is the Effector region element. Residues D62 to Q66 and T120 to D123 contribute to the GTP site.

Belongs to the small GTPase superfamily. Rho family. May be palmitoylated.

It localises to the cytoplasm. The protein resides in the membrane. Inactive GDP-bound Rho GTPases reside in the cytosol, are found in a complex with Rho GDP-dissociation inhibitors (Rho GDIs), and are released from the GDI protein in order to translocate to membranes upon activation. This is Rac-like GTP-binding protein 3 (RAC3) from Oryza sativa subsp. japonica (Rice).